A 149-amino-acid chain; its full sequence is Large ribosomal subunit protein uL13 (149 aa).

This sequence belongs to the universal ribosomal protein uL13 family. In terms of assembly, part of the 50S ribosomal subunit.

Functionally, this protein is one of the early assembly proteins of the 50S ribosomal subunit, although it is not seen to bind rRNA by itself. It is important during the early stages of 50S assembly. This is Large ribosomal subunit protein uL13 from Borrelia duttonii (strain Ly).